We begin with the raw amino-acid sequence, 155 residues long: Ribonuclease H (155 aa).

The RNase H type-1 domain maps to 1–142; sequence MTKQVEIFTD…CDELARAAAM (142 aa). Mg(2+) contacts are provided by Asp-10, Glu-48, Asp-70, and Asp-134.

The protein belongs to the RNase H family. Monomer. Requires Mg(2+) as cofactor.

It localises to the cytoplasm. It carries out the reaction Endonucleolytic cleavage to 5'-phosphomonoester.. Its function is as follows. Endonuclease that specifically degrades the RNA of RNA-DNA hybrids. The polypeptide is Ribonuclease H (Enterobacter sp. (strain 638)).